The sequence spans 154 residues: 6,7-dimethyl-8-ribityllumazine synthase (154 aa).

Residues Phe-26, 60-62, and 84-86 contribute to the 5-amino-6-(D-ribitylamino)uracil site; these read ALE and CII. 89-90 contacts (2S)-2-hydroxy-3-oxobutyl phosphate; the sequence is ET. His-92 functions as the Proton donor in the catalytic mechanism. A 5-amino-6-(D-ribitylamino)uracil-binding site is contributed by Asn-117. Arg-131 contributes to the (2S)-2-hydroxy-3-oxobutyl phosphate binding site.

Belongs to the DMRL synthase family.

The enzyme catalyses (2S)-2-hydroxy-3-oxobutyl phosphate + 5-amino-6-(D-ribitylamino)uracil = 6,7-dimethyl-8-(1-D-ribityl)lumazine + phosphate + 2 H2O + H(+). Its pathway is cofactor biosynthesis; riboflavin biosynthesis; riboflavin from 2-hydroxy-3-oxobutyl phosphate and 5-amino-6-(D-ribitylamino)uracil: step 1/2. In terms of biological role, catalyzes the formation of 6,7-dimethyl-8-ribityllumazine by condensation of 5-amino-6-(D-ribitylamino)uracil with 3,4-dihydroxy-2-butanone 4-phosphate. This is the penultimate step in the biosynthesis of riboflavin. The protein is 6,7-dimethyl-8-ribityllumazine synthase of Paracidovorax citrulli (strain AAC00-1) (Acidovorax citrulli).